Here is a 310-residue protein sequence, read N- to C-terminus: Protein FAM153A (310 aa).

Disordered stretches follow at residues 39 to 58 (LGVP…LCPP), 108 to 136 (QTNG…HTME), 156 to 184 (SYNG…DLEE), and 250 to 297 (TITG…KKSR). The segment covering 259–268 (SASPSSAPAE) has biased composition (low complexity). Positions 270–282 (ATEKTKVEEEVKT) are enriched in basic and acidic residues. Positions 283–297 (RKPKKKTRKPSKKSR) are enriched in basic residues.

The protein belongs to the FAM153 family.

The sequence is that of Protein FAM153A (FAM153A) from Homo sapiens (Human).